The sequence spans 573 residues: Protein translocase subunit SecD (573 aa).

Residues 13–33 (YLSVFLVMLIGIYLLVFFTGD) traverse the membrane as a helical segment. Residues 127–200 (AQPAAEEPQP…PPAEAPATDP (74 aa)) are disordered. Pro residues-rich tracts occupy residues 135–154 (QPAPSAEPQPPGQPAAPPPA) and 161–194 (SPQPGAQPRPYPQDPAPSPNPTSPASPPPAPPAE). Helical transmembrane passes span 385 to 405 (AGMIAGAIGLLLVLVYSLLYY), 410 to 430 (LLTALSLVASGSMVFAILVLL), 441 to 461 (AGIAGLIIGIGTTADSFVVFF), 489 to 509 (IVSGNAVTFLAAAVLYFLAIG), and 514 to 534 (FAFTLGLTTILDLVVVFLVTW).

The protein belongs to the SecD/SecF family. SecD subfamily. As to quaternary structure, forms a complex with SecF. Part of the essential Sec protein translocation apparatus which comprises SecA, SecYEG and auxiliary proteins SecDF. Other proteins may also be involved.

The protein resides in the cell membrane. Functionally, part of the Sec protein translocase complex. Interacts with the SecYEG preprotein conducting channel. SecDF uses the proton motive force (PMF) to complete protein translocation after the ATP-dependent function of SecA. In Mycobacterium tuberculosis (strain CDC 1551 / Oshkosh), this protein is Protein translocase subunit SecD.